The following is an 854-amino-acid chain: Golgin subfamily A member 6-like protein 22 (854 aa).

Disordered stretches follow at residues 1 to 114 (MLMW…HQEA), 320 to 348 (QEEK…MRRQ), 366 to 447 (MHEQ…MWRQ), 481 to 568 (QEEK…MWRQ), 581 to 681 (RQEE…EQEE), and 714 to 854 (QEEK…MQEH). A compositionally biased stretch (basic residues) spans 15–35 (LPTHPHLPTHPHLPTHPHLPT). Positions 45–66 (MSKETRQSKLAEAKEQLTDHHP) are enriched in basic and acidic residues. Composition is skewed to polar residues over residues 67–77 (QTNPSVGTAAS) and 85–97 (NNGT…TSGG). Residues 100 to 114 (SPEDEQKASHQHQEA) are compositionally biased toward basic and acidic residues. Residues 103 to 854 (DEQKASHQHQ…RQQEEKMQEH (752 aa)) adopt a coiled-coil conformation.

The protein belongs to the GOLGA6 family.

The protein is Golgin subfamily A member 6-like protein 22 of Homo sapiens (Human).